Here is a 406-residue protein sequence, read N- to C-terminus: Tyrosine--tRNA ligase (406 aa).

Position 35 (Tyr-35) interacts with L-tyrosine. Positions 40–49 (ATSTSLHIGH) match the 'HIGH' region motif. L-tyrosine contacts are provided by Tyr-166 and Gln-170. The 'KMSKS' region signature appears at 226–230 (KMGKS). Lys-229 provides a ligand contact to ATP. The S4 RNA-binding domain occupies 341 to 405 (ILLVDLMVSS…IGKKKILRII (65 aa)).

It belongs to the class-I aminoacyl-tRNA synthetase family. TyrS type 1 subfamily. As to quaternary structure, homodimer.

The protein localises to the cytoplasm. The catalysed reaction is tRNA(Tyr) + L-tyrosine + ATP = L-tyrosyl-tRNA(Tyr) + AMP + diphosphate + H(+). Functionally, catalyzes the attachment of tyrosine to tRNA(Tyr) in a two-step reaction: tyrosine is first activated by ATP to form Tyr-AMP and then transferred to the acceptor end of tRNA(Tyr). The chain is Tyrosine--tRNA ligase from Borrelia hermsii (strain HS1 / DAH).